The following is a 996-amino-acid chain: Oxysterol-binding protein homolog 3 (996 aa).

The segment at 1–183 is GOLD domain; that stretch reads METIDIQNRS…KKKILFNASV (183 aa). Residues 75–114 form a disordered region; that stretch reads GSSSNIEEHHRRSSQHSHSSSNGSDNKRKERSYSSLSISG. Phosphoserine occurs at positions 190 and 193. Thr210 carries the post-translational modification Phosphothreonine. Positions 221–315 constitute a PH domain; it reads GRYLQGYLLK…WVDALQTCFD (95 aa). Thr323 is modified (phosphothreonine). The residue at position 324 (Ser324) is a Phosphoserine. A phosphothreonine mark is found at Thr325 and Thr352. The disordered stretch occupies residues 338-372; that stretch reads EVINKSSPQDHDHLTPTATTKSALSHRQHTQKDMD. Residues 514 to 520 carry the FFAT motif; that stretch reads EFFDAEE. The disordered stretch occupies residues 556–611; that stretch reads KEVQLSGSEQIASSSVESYTTNDENHSRKHLKNRHKNRRRGHPHHQKTKSAQSSTE. The span at 558 to 577 shows a compositional bias: polar residues; the sequence is VQLSGSEQIASSSVESYTTN. Over residues 582–603 the composition is skewed to basic residues; it reads SRKHLKNRHKNRRRGHPHHQKT. Ser605 bears the Phosphoserine mark. Residues 642-982 form an OSBP-related domain (ORD) region; it reads SLLSFLRKNV…YITGPKSYWE (341 aa). Residues 657–660, Lys717, 745–746, and 945–949 contribute to the a 1,2-diacyl-sn-glycero-3-phospho-(1D-myo-inositol 4-phosphate) site; these read SIAM, HR, and EQLQR.

Belongs to the OSBP family. Interacts with SCS2.

The protein resides in the cytoplasm. It localises to the endoplasmic reticulum membrane. Its function is as follows. Lipid transport protein (LTP) involved in non-vesicular transfer of lipids between membranes. Functions in phosphoinositide-coupled directional transport of various lipids by carrying the lipid molecule in a hydrophobic pocket and transferring it between membranes through the cytosol. Involved in maintenance of intracellular sterol distribution and homeostasis. May serve as a sensor of PI4P levels at PM-ER membrane contact site, regulating PI4P phosphatase SAC1 activity. May be involved in ergosterol transport from the plasma membrane (PM) to the ER, however it does not bind sterols directly. Plays a role in the positive regulation of vesicular transport of ceramide from the ER to the Golgi, negatively regulating COPII-mediated ER export of cargos. The polypeptide is Oxysterol-binding protein homolog 3 (Saccharomyces cerevisiae (strain ATCC 204508 / S288c) (Baker's yeast)).